Consider the following 338-residue polypeptide: MAASQVLGEKINILSGETVKAGDRDPLGNDCPEQDRLPQRSWRQKCASYVLALRPWSFSASLTPVALGSALAYRSHGVLDPRLLVGCAVAVLAVHGAGNLVNTYYDFSKGIDHKKSDDRTLVDRILEPQDVVRFGVFLYTLGCVCAACLYYLSPLKLEHLALIYFGGLSGSFLYTGGIGFKYVALGDLIILITFGPLAVMFAYAIQVGSLAIFPLVYAIPLALSTEAILHSNNTRDMESDREAGIVTLAILIGPTFSYILYNTLLFLPYLVFSILATHCTISLALPLLTIPMAFSLERQFRSQAFNKLPQRTAKLNLLLGLFYVFGIILAPAGSLPKI.

At alanine 2 the chain carries N-acetylalanine. 8 consecutive transmembrane segments (helical) span residues 83–103 (LLVG…LVNT), 134–154 (FGVF…YLSP), 160–180 (LALI…GIGF), 188–208 (LIIL…IQVG), 209–229 (SLAI…EAIL), 245–267 (IVTL…LLFL), 277–297 (THCT…FSLE), and 315–335 (LNLL…AGSL).

The protein belongs to the UbiA prenyltransferase family. In terms of assembly, interacts with HMGCR and SOAT1. In terms of tissue distribution, ubiquitously expressed.

Its subcellular location is the endoplasmic reticulum membrane. It localises to the golgi apparatus membrane. The protein localises to the mitochondrion membrane. It is found in the cytoplasm. The protein resides in the nucleus. It carries out the reaction menadiol + (2E,6E,10E)-geranylgeranyl diphosphate = menaquinol-4 + diphosphate. It catalyses the reaction all-trans-decaprenyl diphosphate + 4-hydroxybenzoate = 4-hydroxy-3-(all-trans-decaprenyl)benzoate + diphosphate. Its pathway is quinol/quinone metabolism; menaquinone biosynthesis. It participates in cofactor biosynthesis; ubiquinone biosynthesis. Functionally, prenyltransferase that mediates the formation of menaquinone-4 (MK-4) and coenzyme Q10. MK-4 is a vitamin K2 isoform present at high concentrations in the brain, kidney and pancreas, and is required for endothelial cell development. Mediates the conversion of phylloquinone (PK) into MK-4, probably by cleaving the side chain of phylloquinone (PK) to release 2-methyl-1,4-naphthoquinone (menadione; K3) and then prenylating it with geranylgeranyl pyrophosphate (GGPP) to form MK-4. Also plays a role in cardiovascular development independently of MK-4 biosynthesis, by acting as a coenzyme Q10 biosynthetic enzyme: coenzyme Q10, also named ubiquinone, plays an important antioxidant role in the cardiovascular system. Mediates biosynthesis of coenzyme Q10 in the Golgi membrane, leading to protect cardiovascular tissues from NOS3/eNOS-dependent oxidative stress. In Homo sapiens (Human), this protein is UbiA prenyltransferase domain-containing protein 1.